A 317-amino-acid chain; its full sequence is Spermidine synthase 2 (317 aa).

Residues 27 to 264 enclose the PABS domain; sequence PGWFSEISPL…GMIGFMLCST (238 aa). Gln-58 provides a ligand contact to S-adenosyl 3-(methylsulfanyl)propylamine. Tyr-88 provides a ligand contact to putrescine. S-adenosyl 3-(methylsulfanyl)propylamine contacts are provided by residues Gln-89, Asp-113, Glu-133, 164 to 165, and Asp-183; that span reads DG. The active-site Proton acceptor is Asp-183. Putrescine contacts are provided by residues 183–186 and Tyr-252; that span reads DSSD.

Belongs to the spermidine/spermine synthase family.

The enzyme catalyses S-adenosyl 3-(methylsulfanyl)propylamine + putrescine = S-methyl-5'-thioadenosine + spermidine + H(+). It functions in the pathway amine and polyamine biosynthesis; spermidine biosynthesis; spermidine from putrescine: step 1/1. The chain is Spermidine synthase 2 from Datura stramonium (Jimsonweed).